The chain runs to 360 residues: A-type ATP synthase subunit C (360 aa).

The tract at residues 1–23 (MRLLERLWGKKPSRKSDKKKKGT) is disordered. Residues 9 to 22 (GKKPSRKSDKKKKG) show a composition bias toward basic residues.

The protein belongs to the V-ATPase V0D/AC39 subunit family. As to quaternary structure, has multiple subunits with at least A(3), B(3), C, D, E, F, H, I and proteolipid K(x).

The protein resides in the cell membrane. Functionally, component of the A-type ATP synthase that produces ATP from ADP in the presence of a proton gradient across the membrane. In Methanosarcina acetivorans (strain ATCC 35395 / DSM 2834 / JCM 12185 / C2A), this protein is A-type ATP synthase subunit C.